We begin with the raw amino-acid sequence, 283 residues long: Diaminopimelate epimerase (283 aa).

Asparagine 14, glutamine 47, and asparagine 67 together coordinate substrate. Cysteine 76 serves as the catalytic Proton donor. Residues 77-78 (GN), asparagine 164, asparagine 197, and 215-216 (ER) contribute to the substrate site. Cysteine 224 acts as the Proton acceptor in catalysis. 225 to 226 (GT) is a binding site for substrate.

The protein belongs to the diaminopimelate epimerase family. In terms of assembly, homodimer.

It is found in the cytoplasm. It carries out the reaction (2S,6S)-2,6-diaminopimelate = meso-2,6-diaminopimelate. It functions in the pathway amino-acid biosynthesis; L-lysine biosynthesis via DAP pathway; DL-2,6-diaminopimelate from LL-2,6-diaminopimelate: step 1/1. Catalyzes the stereoinversion of LL-2,6-diaminopimelate (L,L-DAP) to meso-diaminopimelate (meso-DAP), a precursor of L-lysine and an essential component of the bacterial peptidoglycan. This Neisseria meningitidis serogroup A / serotype 4A (strain DSM 15465 / Z2491) protein is Diaminopimelate epimerase.